The sequence spans 232 residues: GFP-like non-fluorescent chromoprotein FP595 (232 aa).

The segment at residues 63–65 is a cross-link (2-iminomethyl-5-imidazolinone (Met-Gly)); the sequence is MYG. Y64 carries the (E)-2,3-didehydrotyrosine modification.

It belongs to the GFP family. In terms of processing, contains a chromophore consisting of modified amino acid residues. The chromophore is formed by autocatalytic backbone condensation between Xaa-N and Gly-(N+2), oxidation of Tyr-(N+1) to didehydrotyrosine, and formation of a double bond to the alpha-amino nitrogen of residue Tyr-(N+1). Maturation of the chromophore requires nothing other than molecular oxygen. Tentacle tips.

Functionally, pigment protein that is intensely purple in color. This is GFP-like non-fluorescent chromoprotein FP595 from Anemonia sulcata (Mediterranean snakelocks sea anemone).